A 318-amino-acid polypeptide reads, in one-letter code: NADH-ubiquinone oxidoreductase chain 1 (318 aa).

The next 8 membrane-spanning stretches (helical) occupy residues 2 to 22, 69 to 89, 102 to 122, 146 to 166, 171 to 191, 222 to 242, 253 to 273, and 294 to 314; these read FLIN…FLTL, FLFT…WAPL, LLFI…SGWA, MTTI…TAFA, HLWL…STLA, LFFM…VILF, EIST…FLWV, and LPLT…LACI.

Belongs to the complex I subunit 1 family. In terms of assembly, core subunit of respiratory chain NADH dehydrogenase (Complex I) which is composed of 45 different subunits.

The protein resides in the mitochondrion inner membrane. It carries out the reaction a ubiquinone + NADH + 5 H(+)(in) = a ubiquinol + NAD(+) + 4 H(+)(out). Functionally, core subunit of the mitochondrial membrane respiratory chain NADH dehydrogenase (Complex I) which catalyzes electron transfer from NADH through the respiratory chain, using ubiquinone as an electron acceptor. Essential for the catalytic activity and assembly of complex I. This is NADH-ubiquinone oxidoreductase chain 1 (MT-ND1) from Elephas maximus (Indian elephant).